The primary structure comprises 58 residues: Large ribosomal subunit protein uL30 (58 aa).

This sequence belongs to the universal ribosomal protein uL30 family. Part of the 50S ribosomal subunit.

This Pseudomonas entomophila (strain L48) protein is Large ribosomal subunit protein uL30.